The primary structure comprises 453 residues: Methylenetetrahydrofolate--tRNA-(uracil-5-)-methyltransferase TrmFO (453 aa).

FAD is bound at residue 10–15; sequence GGGLAG. The interval 433–453 is disordered; the sequence is ELAPWIDSAPPTAVPAAPAAG. Low complexity predominate over residues 441 to 453; that stretch reads APPTAVPAAPAAG.

The protein belongs to the MnmG family. TrmFO subfamily. Requires FAD as cofactor.

The protein localises to the cytoplasm. The enzyme catalyses uridine(54) in tRNA + (6R)-5,10-methylene-5,6,7,8-tetrahydrofolate + NADH + H(+) = 5-methyluridine(54) in tRNA + (6S)-5,6,7,8-tetrahydrofolate + NAD(+). It carries out the reaction uridine(54) in tRNA + (6R)-5,10-methylene-5,6,7,8-tetrahydrofolate + NADPH + H(+) = 5-methyluridine(54) in tRNA + (6S)-5,6,7,8-tetrahydrofolate + NADP(+). In terms of biological role, catalyzes the folate-dependent formation of 5-methyl-uridine at position 54 (M-5-U54) in all tRNAs. This chain is Methylenetetrahydrofolate--tRNA-(uracil-5-)-methyltransferase TrmFO, found in Anaeromyxobacter dehalogenans (strain 2CP-1 / ATCC BAA-258).